Reading from the N-terminus, the 479-residue chain is Aspartyl/glutamyl-tRNA(Asn/Gln) amidotransferase subunit B (479 aa).

The protein belongs to the GatB/GatE family. GatB subfamily. In terms of assembly, heterotrimer of A, B and C subunits.

The catalysed reaction is L-glutamyl-tRNA(Gln) + L-glutamine + ATP + H2O = L-glutaminyl-tRNA(Gln) + L-glutamate + ADP + phosphate + H(+). It carries out the reaction L-aspartyl-tRNA(Asn) + L-glutamine + ATP + H2O = L-asparaginyl-tRNA(Asn) + L-glutamate + ADP + phosphate + 2 H(+). In terms of biological role, allows the formation of correctly charged Asn-tRNA(Asn) or Gln-tRNA(Gln) through the transamidation of misacylated Asp-tRNA(Asn) or Glu-tRNA(Gln) in organisms which lack either or both of asparaginyl-tRNA or glutaminyl-tRNA synthetases. The reaction takes place in the presence of glutamine and ATP through an activated phospho-Asp-tRNA(Asn) or phospho-Glu-tRNA(Gln). This Streptococcus suis (strain 98HAH33) protein is Aspartyl/glutamyl-tRNA(Asn/Gln) amidotransferase subunit B.